The sequence spans 283 residues: MPAVTQPRGESKYDAIPGPLGPQSASLEGKVALVTGAGRGIGREMAMELGRRGCKVIVNYANSTESAEEVVAAIKKNGSDAACVKANVGVVEDIVRMFEEAVKIFGKLDIVCSNSGVVSFGHVKDVTPEEFDRVFTINTRGQFFVAREAYKHLEIGGRLILMGSITGQAKAVPKHAVYSGSKGAIETFARCMAIDMADKKITVNVVAPGGIKTDMYHAVCREYIPNGENLSNEEVDEYAASAWSPLHRVGLPIDIARVVCFLASNDGGWVTGKVIGIDGGACM.

Residues 1-21 (MPAVTQPRGESKYDAIPGPLG) are disordered. 39–63 (RGIGREMAMELGRRGCKVIVNYANS) contacts NADP(+). Ser164 provides a ligand contact to substrate. Tyr178 acts as the Proton acceptor in catalysis.

It belongs to the short-chain dehydrogenases/reductases (SDR) family. As to quaternary structure, homotetramer.

The catalysed reaction is scytalone + NADP(+) = naphthalene-1,3,6,8-tetrol + NADPH + H(+). The protein operates within pigment biosynthesis; melanin biosynthesis. Catalyzes the NADPH-dependent reduction of 1,3,6,8-tetrahydroxynaphthalene (T4HN) into (+)-scytalone and 1,3,8-trihydroxynaphthalene into (-)-vermelone. This enzyme is the biochemical target of several commercially important fungicides which are used to prevent blast disease in rice plants. The chain is Tetrahydroxynaphthalene reductase from Pyricularia oryzae (strain 70-15 / ATCC MYA-4617 / FGSC 8958) (Rice blast fungus).